We begin with the raw amino-acid sequence, 305 residues long: Aspartate carbamoyltransferase catalytic subunit (305 aa).

Carbamoyl phosphate contacts are provided by arginine 56 and threonine 57. Lysine 84 serves as a coordination point for L-aspartate. The carbamoyl phosphate site is built by arginine 106, histidine 136, and glutamine 139. L-aspartate-binding residues include arginine 169 and arginine 221. 2 residues coordinate carbamoyl phosphate: alanine 262 and proline 263.

The protein belongs to the aspartate/ornithine carbamoyltransferase superfamily. ATCase family. As to quaternary structure, heterododecamer (2C3:3R2) of six catalytic PyrB chains organized as two trimers (C3), and six regulatory PyrI chains organized as three dimers (R2).

It catalyses the reaction carbamoyl phosphate + L-aspartate = N-carbamoyl-L-aspartate + phosphate + H(+). It participates in pyrimidine metabolism; UMP biosynthesis via de novo pathway; (S)-dihydroorotate from bicarbonate: step 2/3. Catalyzes the condensation of carbamoyl phosphate and aspartate to form carbamoyl aspartate and inorganic phosphate, the committed step in the de novo pyrimidine nucleotide biosynthesis pathway. This chain is Aspartate carbamoyltransferase catalytic subunit, found in Streptococcus sanguinis (strain SK36).